The chain runs to 369 residues: Glutamate 5-kinase (369 aa).

Residue K11 coordinates ATP. Positions 51, 138, and 150 each coordinate substrate. Residues 170 to 171 (TD) and 212 to 218 (TGGMATK) each bind ATP. Positions 277–355 (KGSIVIDEGA…QDIYAVLGYE (79 aa)) constitute a PUA domain.

This sequence belongs to the glutamate 5-kinase family.

The protein resides in the cytoplasm. It catalyses the reaction L-glutamate + ATP = L-glutamyl 5-phosphate + ADP. Its pathway is amino-acid biosynthesis; L-proline biosynthesis; L-glutamate 5-semialdehyde from L-glutamate: step 1/2. In terms of biological role, catalyzes the transfer of a phosphate group to glutamate to form L-glutamate 5-phosphate. The chain is Glutamate 5-kinase from Aliivibrio fischeri (strain ATCC 700601 / ES114) (Vibrio fischeri).